The following is a 339-amino-acid chain: D-erythrose-4-phosphate dehydrogenase (339 aa).

Residue 11–12 participates in NAD(+) binding; it reads RI. Residues 153–155, Arg-199, 212–213, and Arg-235 contribute to the substrate site; these read SCT and TK. The Nucleophile role is filled by Cys-154. Residue Asn-317 participates in NAD(+) binding.

Belongs to the glyceraldehyde-3-phosphate dehydrogenase family. Epd subfamily. As to quaternary structure, homotetramer.

It is found in the cytoplasm. It carries out the reaction D-erythrose 4-phosphate + NAD(+) + H2O = 4-phospho-D-erythronate + NADH + 2 H(+). Its pathway is cofactor biosynthesis; pyridoxine 5'-phosphate biosynthesis; pyridoxine 5'-phosphate from D-erythrose 4-phosphate: step 1/5. Functionally, catalyzes the NAD-dependent conversion of D-erythrose 4-phosphate to 4-phosphoerythronate. This is D-erythrose-4-phosphate dehydrogenase from Shewanella frigidimarina (strain NCIMB 400).